The chain runs to 88 residues: Kunitz-type kappaPI-theraphotoxin-Hs1d (88 aa).

A signal peptide spans 1 to 27 (MGIARILSAVLFLSVLFVVTFPTLLSA). Positions 28-33 (DHHDGR) are excised as a propeptide. The BPTI/Kunitz inhibitor domain maps to 37–85 (CRLPSDRGRCKASFERWYFNGTTCTKFVYGGYGGNDNRFPTEKACMKRC). Intrachain disulfides connect cysteine 37-cysteine 85 and cysteine 60-cysteine 81.

The protein belongs to the venom Kunitz-type family. 01 (intermediate) subfamily. Expressed by the venom gland.

It localises to the secreted. Serine protease inhibitor that inhibits trypsin at a molar ratio of 1:1. This is Kunitz-type kappaPI-theraphotoxin-Hs1d from Cyriopagopus schmidti (Chinese bird spider).